The sequence spans 389 residues: MKIHEYQGKELLRQFNVPVPNGIPAFSVDEAVKAAEKLGGPVWVVKAQIHAGGRGKGGGVKLAKSMDEVKRYASEILGMQLKTHQTGPEGQKVNRLLIEDGADIKKEYYFSIVTDRGTQKNVIMASSEGGMDIEEVAESHPEKIIKVFVDPMVGLTDADCDIIAKGIGVPEASIPMARDVFKNLYKTYWDTDASLVEINPLILEGNGKIKALDAKFNFDPNALFRHPEIVAYRDIDEEDAAEIEASKFDLTYISLDGNIGCLVNGAGLAMATMDAIKLFGGEPANFLDVGGGATAEKVTEAFKIMLKNKNVQAILVNIFGGIMRCDVIADGVVTACKVVNLTVPLVVRMKGTNEELGKKILADSGLPIISTDSMTEAATKVVAAVAKNK.

The region spanning 9–244 (KELLRQFNVP…IDEEDAAEIE (236 aa)) is the ATP-grasp domain. ATP-binding positions include Lys46, 53–55 (GRG), Glu99, Ala102, and Glu107. Mg(2+) is bound by residues Asn199 and Asp213. Substrate is bound by residues Asn264 and 321–323 (GIM).

Belongs to the succinate/malate CoA ligase beta subunit family. As to quaternary structure, heterotetramer of two alpha and two beta subunits. The cofactor is Mg(2+).

It carries out the reaction succinate + ATP + CoA = succinyl-CoA + ADP + phosphate. The catalysed reaction is GTP + succinate + CoA = succinyl-CoA + GDP + phosphate. Its pathway is carbohydrate metabolism; tricarboxylic acid cycle; succinate from succinyl-CoA (ligase route): step 1/1. Its function is as follows. Succinyl-CoA synthetase functions in the citric acid cycle (TCA), coupling the hydrolysis of succinyl-CoA to the synthesis of either ATP or GTP and thus represents the only step of substrate-level phosphorylation in the TCA. The beta subunit provides nucleotide specificity of the enzyme and binds the substrate succinate, while the binding sites for coenzyme A and phosphate are found in the alpha subunit. The sequence is that of Succinate--CoA ligase [ADP-forming] subunit beta from Polynucleobacter necessarius subsp. necessarius (strain STIR1).